A 1004-amino-acid chain; its full sequence is uncharacterized protein (1004 aa).

N-linked (GlcNAc...) asparagine glycosylation is present at Asn-27. 4 consecutive transmembrane segments (helical) span residues 38-58, 77-97, 188-208, and 324-344; these read FGFS…LLAI, IVPD…LIVI, LSPV…LIAY, and FILM…SLFS. 3 N-linked (GlcNAc...) asparagine glycosylation sites follow: Asn-392, Asn-418, and Asn-421. 2 helical membrane-spanning segments follow: residues 422-442 and 599-619; these read MSLS…VIAF and MSNI…IIDM. The N-linked (GlcNAc...) asparagine glycan is linked to Asn-627. Transmembrane regions (helical) follow at residues 726–746 and 823–843; these read GYPL…ISVF and GDYI…VLGS. Asn-859 carries an N-linked (GlcNAc...) asparagine glycan.

It to yeast YPR031w.

It is found in the membrane. This is an uncharacterized protein from Schizosaccharomyces pombe (strain 972 / ATCC 24843) (Fission yeast).